The chain runs to 481 residues: MQWETVIGLEIHAQLATQSKIFSGSSTAFGAAPNTQASLVDLAMPGTLPVLNEEAVRMACLFGLAIDARIDRQNVFARKNYFYPDLPKGYQTSQMDHPIVGKGHLDITLEDGTTKRIGITRAHLEEDAGKSLHEDFQGMSGIDLNRAGTPLLEIVSEPDIRSAKEAVAYVKAIHALVRYLGICDGNMAEGSLRCDCNVSVRPKGQAEFGTRAEIKNVNSFRFIEKAINHEIQRQIELIEDGGKVVQETRLYDPNKDETRSMRGKEEANDYRYFPCPDLLPVVIEPEYLAKLREQLPELPVQKRERFESQYGLSAYDASVLSASREMADYFEKVQGICGDAKLAANWVMVELGSLLNKDGLEIEQSPVSAEQLGGMILRIKDNTISGKLAKMVFEAMANGEGSADQIIEAKGLKQVTDSGAIEKMLDEVLAANAEQVEQYRAADEAKRGKMFGFFVGQAMKASKGKANPQQVNELLKKKLEA.

It belongs to the GatB/GatE family. GatB subfamily. As to quaternary structure, heterotrimer of A, B and C subunits.

The enzyme catalyses L-glutamyl-tRNA(Gln) + L-glutamine + ATP + H2O = L-glutaminyl-tRNA(Gln) + L-glutamate + ADP + phosphate + H(+). It carries out the reaction L-aspartyl-tRNA(Asn) + L-glutamine + ATP + H2O = L-asparaginyl-tRNA(Asn) + L-glutamate + ADP + phosphate + 2 H(+). Its function is as follows. Allows the formation of correctly charged Asn-tRNA(Asn) or Gln-tRNA(Gln) through the transamidation of misacylated Asp-tRNA(Asn) or Glu-tRNA(Gln) in organisms which lack either or both of asparaginyl-tRNA or glutaminyl-tRNA synthetases. The reaction takes place in the presence of glutamine and ATP through an activated phospho-Asp-tRNA(Asn) or phospho-Glu-tRNA(Gln). This is Aspartyl/glutamyl-tRNA(Asn/Gln) amidotransferase subunit B from Pseudomonas aeruginosa (strain LESB58).